Reading from the N-terminus, the 156-residue chain is ATP synthase subunit b 1 (156 aa).

The chain crosses the membrane as a helical span at residues 5–27; sequence FTLISQAMAFAIFIWFTVRFVWP.

This sequence belongs to the ATPase B chain family. In terms of assembly, F-type ATPases have 2 components, F(1) - the catalytic core - and F(0) - the membrane proton channel. F(1) has five subunits: alpha(3), beta(3), gamma(1), delta(1), epsilon(1). F(0) has three main subunits: a(1), b(2) and c(10-14). The alpha and beta chains form an alternating ring which encloses part of the gamma chain. F(1) is attached to F(0) by a central stalk formed by the gamma and epsilon chains, while a peripheral stalk is formed by the delta and b chains.

It localises to the cell inner membrane. F(1)F(0) ATP synthase produces ATP from ADP in the presence of a proton or sodium gradient. F-type ATPases consist of two structural domains, F(1) containing the extramembraneous catalytic core and F(0) containing the membrane proton channel, linked together by a central stalk and a peripheral stalk. During catalysis, ATP synthesis in the catalytic domain of F(1) is coupled via a rotary mechanism of the central stalk subunits to proton translocation. Functionally, component of the F(0) channel, it forms part of the peripheral stalk, linking F(1) to F(0). The sequence is that of ATP synthase subunit b 1 from Nitrosospira multiformis (strain ATCC 25196 / NCIMB 11849 / C 71).